The primary structure comprises 247 residues: Coproheme decarboxylase (247 aa).

Fe-coproporphyrin III-binding positions include arginine 129, 143–147 (YPMDK), histidine 170, glutamine 183, and serine 221. The active site involves tyrosine 143.

This sequence belongs to the ChdC family. Type 1 subfamily. It depends on Fe-coproporphyrin III as a cofactor.

The enzyme catalyses Fe-coproporphyrin III + 2 H2O2 + 2 H(+) = heme b + 2 CO2 + 4 H2O. The catalysed reaction is Fe-coproporphyrin III + H2O2 + H(+) = harderoheme III + CO2 + 2 H2O. It catalyses the reaction harderoheme III + H2O2 + H(+) = heme b + CO2 + 2 H2O. The protein operates within porphyrin-containing compound metabolism; protoheme biosynthesis. Involved in coproporphyrin-dependent heme b biosynthesis. Catalyzes the decarboxylation of Fe-coproporphyrin III (coproheme) to heme b (protoheme IX), the last step of the pathway. The reaction occurs in a stepwise manner with a three-propionate intermediate. This chain is Coproheme decarboxylase, found in Bacillus cereus (strain B4264).